The primary structure comprises 137 residues: MKHVFSTSLIVSLFVIFTDAQTFQYSRGWTNGKRSSPEQTAPSRTLLPHIPLGMDKPDEECRLLIQRFLKSPCDVRLANAIVNRNKDLLRDMADDVNDGTALLYDPVPMVDTAASEDVRFKRGTPDRRLLNDGMHRL.

An N-terminal signal peptide occupies residues 1–20; the sequence is MKHVFSTSLIVSLFVIFTDA. At glutamine 21 the chain carries Pyrrolidone carboxylic acid. Residue asparagine 31 is modified to Asparagine amide. A propeptide spanning residues 68-137 is cleaved from the precursor; sequence FLKSPCDVRL…RLLNDGMHRL (70 aa).

It belongs to the corazonin family.

The protein resides in the secreted. Functionally, cardioactive peptide. Corazonin is probably involved in the physiological regulation of the heart beat. This is Pro-corazonin from Aedes aegypti (Yellowfever mosquito).